A 227-amino-acid chain; its full sequence is Cytidylate kinase (227 aa).

12 to 20 (GPSGAGKGT) contacts ATP.

The protein belongs to the cytidylate kinase family. Type 1 subfamily.

It is found in the cytoplasm. The enzyme catalyses CMP + ATP = CDP + ADP. It carries out the reaction dCMP + ATP = dCDP + ADP. The protein is Cytidylate kinase of Citrobacter koseri (strain ATCC BAA-895 / CDC 4225-83 / SGSC4696).